We begin with the raw amino-acid sequence, 149 residues long: Transcriptional repressor NrdR (149 aa).

A zinc finger lies at 3-34 (CPFCGANDTKVIDSRLVADGHQVRRRRQCLAC). An ATP-cone domain is found at 49–139 (PRVIKTDGNR…VYRSFEDIRE (91 aa)).

The protein belongs to the NrdR family. It depends on Zn(2+) as a cofactor.

Functionally, negatively regulates transcription of bacterial ribonucleotide reductase nrd genes and operons by binding to NrdR-boxes. This chain is Transcriptional repressor NrdR, found in Photobacterium profundum (strain SS9).